Reading from the N-terminus, the 345-residue chain is Skn-1 dependent zygotic transcript 15 protein (345 aa).

In terms of domain architecture, F-box spans 11 to 55 (AFGLHKLPHLVSDKVVKSMVPMELFTYSMVAEETKALVKRLFKKV).

May have a role in embryogenesis. The protein is Skn-1 dependent zygotic transcript 15 protein (sdz-15) of Caenorhabditis elegans.